The chain runs to 320 residues: Protein MRH1 (320 aa).

The Extracellular segment spans residues 1-34 (MSTFETLIKRGGNEAIKINPPTGADFHITSRGSD). The helical transmembrane segment at 35-55 (WFWTCFCCYLLFGLILTFLMF) threads the bilayer. Residues 56–62 (RKPVNDR) lie on the Cytoplasmic side of the membrane. Residues 63-83 (FFYLTGIAPNFFMCIAYFTMA) traverse the membrane as a helical segment. Topologically, residues 84–116 (SNLGWIPVKAKYNHVQTSTQKEHPGYRQIFYSR) are extracellular. Residues 117 to 137 (FVGWFLALPWPIIQICMLAGT) traverse the membrane as a helical segment. The Cytoplasmic portion of the chain corresponds to 138–141 (PFWQ). Residues 142-162 (MAFNVCITEFFTVCWLIAACV) form a helical membrane-spanning segment. The Extracellular segment spans residues 163 to 167 (HSTYK). The helical transmembrane segment at 168–188 (WGYYTIGLGAAIVVSISVMTT) threads the bilayer. Topologically, residues 189-204 (SYNLVKQRDNDIRLTF) are cytoplasmic. A helical transmembrane segment spans residues 205-225 (LVFFSIIMFLWIIAYPTCFGI). Over 226-238 (TDGGNVLQPDSAG) the chain is Extracellular. The chain crosses the membrane as a helical span at residues 239-259 (IFYGIIDLILMCFIPTLLVPI). The Cytoplasmic segment spans residues 260 to 320 (ANHFGADKLG…KSKKSKKSEE (61 aa)). The disordered stretch occupies residues 285-320 (APVASPRPAATPNLSKDKKKKSKKSKKSKKSKKSEE). Ser289 carries the post-translational modification Phosphoserine. A Phosphothreonine modification is found at Thr295. A Phosphoserine modification is found at Ser299. Basic residues predominate over residues 301 to 320 (DKKKKSKKSKKSKKSKKSEE).

The protein belongs to the archaeal/bacterial/fungal opsin family.

Its subcellular location is the cell membrane. The protein localises to the mitochondrion. It localises to the bud. This is Protein MRH1 (MRH1) from Saccharomyces cerevisiae (strain ATCC 204508 / S288c) (Baker's yeast).